The sequence spans 314 residues: Ornithine carbamoyltransferase (314 aa).

Carbamoyl phosphate-binding positions include 61 to 64 (STRT), Q88, R112, and 139 to 142 (HPCQ). L-ornithine contacts are provided by residues N170, D234, and 238–239 (SM). Carbamoyl phosphate is bound by residues 274–275 (CL) and R302.

This sequence belongs to the aspartate/ornithine carbamoyltransferase superfamily. OTCase family.

It localises to the cytoplasm. The enzyme catalyses carbamoyl phosphate + L-ornithine = L-citrulline + phosphate + H(+). The protein operates within amino-acid biosynthesis; L-arginine biosynthesis; L-arginine from L-ornithine and carbamoyl phosphate: step 1/3. Reversibly catalyzes the transfer of the carbamoyl group from carbamoyl phosphate (CP) to the N(epsilon) atom of ornithine (ORN) to produce L-citrulline. This Anoxybacillus flavithermus (strain DSM 21510 / WK1) protein is Ornithine carbamoyltransferase.